The following is an 84-amino-acid chain: Small ribosomal subunit protein uS17 (84 aa).

Belongs to the universal ribosomal protein uS17 family. Part of the 30S ribosomal subunit.

Functionally, one of the primary rRNA binding proteins, it binds specifically to the 5'-end of 16S ribosomal RNA. This is Small ribosomal subunit protein uS17 from Clostridium perfringens (strain SM101 / Type A).